A 1186-amino-acid polypeptide reads, in one-letter code: Pesticidal crystal protein Cry14Aa (1186 aa).

The protein belongs to the delta endotoxin family.

Functionally, promotes colloidosmotic lysis by binding to the midgut epithelial cells of insects. This Bacillus thuringiensis subsp. sotto protein is Pesticidal crystal protein Cry14Aa (cry14Aa).